The following is a 63-amino-acid chain: Large ribosomal subunit protein uL29 (63 aa).

The protein belongs to the universal ribosomal protein uL29 family.

This Shigella flexneri protein is Large ribosomal subunit protein uL29.